The following is a 184-amino-acid chain: Casparian strip membrane protein 3 (184 aa).

The Cytoplasmic segment spans residues 1–22; the sequence is MEGSGEHGETSKGPLSKGVSRG. A helical transmembrane segment spans residues 23-43; it reads LCILDLIFRVIAVIGTLASAI. Residues 44–72 are Extracellular-facing; sequence AMGTTNQTMPFFTQFVQFKERYSDLPTLT. The N-linked (GlcNAc...) asparagine glycan is linked to asparagine 49. Residues 73 to 93 form a helical membrane-spanning segment; that stretch reads FFVVANSIASAYLIISLPLSI. Topologically, residues 94-105 are cytoplasmic; it reads VHIIRSRAKYSR. The chain crosses the membrane as a helical span at residues 106–126; it reads LILIFFDVAMLALVTAAASAG. Topologically, residues 127–159 are extracellular; the sequence is AAIVYLAHNGNVSANWFAICQQFDSFCERISGS. The N-linked (GlcNAc...) asparagine glycan is linked to asparagine 137. A helical transmembrane segment spans residues 160 to 180; that stretch reads LIGSFAAMVVLILLILLSAVA. At 181-184 the chain is on the cytoplasmic side; the sequence is LARR.

This sequence belongs to the Casparian strip membrane proteins (CASP) family. As to quaternary structure, homodimer and heterodimers.

Its subcellular location is the cell membrane. Its function is as follows. Regulates membrane-cell wall junctions and localized cell wall deposition. Required for establishment of the Casparian strip membrane domain (CSD) and the subsequent formation of Casparian strips, a cell wall modification of the root endodermis that determines an apoplastic barrier between the intraorganismal apoplasm and the extraorganismal apoplasm and prevents lateral diffusion. The chain is Casparian strip membrane protein 3 from Brachypodium distachyon (Purple false brome).